A 528-amino-acid chain; its full sequence is Glutamyl-tRNA(Gln) amidotransferase subunit A, mitochondrial (528 aa).

Residue K76 is the Charge relay system of the active site. The interval 148–167 (YREKRKQNPHSENEDSDWLI) is disordered. Catalysis depends on S171, which acts as the Charge relay system. S195 (acyl-ester intermediate) is an active-site residue.

This sequence belongs to the amidase family. GatA subfamily. As to quaternary structure, subunit of the heterotrimeric GatCAB amidotransferase (AdT) complex, composed of A (QRSL1), B (GATB) and C (GATC) subunits.

The protein resides in the mitochondrion. The catalysed reaction is L-glutamyl-tRNA(Gln) + L-glutamine + ATP + H2O = L-glutaminyl-tRNA(Gln) + L-glutamate + ADP + phosphate + H(+). Allows the formation of correctly charged Gln-tRNA(Gln) through the transamidation of misacylated Glu-tRNA(Gln) in the mitochondria. The reaction takes place in the presence of glutamine and ATP through an activated gamma-phospho-Glu-tRNA(Gln). This chain is Glutamyl-tRNA(Gln) amidotransferase subunit A, mitochondrial, found in Homo sapiens (Human).